The chain runs to 155 residues: Small ribosomal subunit protein uS7c (155 aa).

It belongs to the universal ribosomal protein uS7 family. In terms of assembly, part of the 30S ribosomal subunit.

It localises to the plastid. Its subcellular location is the chloroplast. In terms of biological role, one of the primary rRNA binding proteins, it binds directly to 16S rRNA where it nucleates assembly of the head domain of the 30S subunit. The polypeptide is Small ribosomal subunit protein uS7c (rps7) (Houttuynia cordata (Chameleon plant)).